Reading from the N-terminus, the 448-residue chain is Homogentisate 1,2-dioxygenase (448 aa).

Histidine 303 serves as the catalytic Proton acceptor. Positions 346 and 352 each coordinate Fe cation. Homogentisate is bound by residues tyrosine 361 and histidine 382. Residue histidine 382 coordinates Fe cation.

It belongs to the homogentisate dioxygenase family. Hexamer; dimer of trimers. Requires Fe cation as cofactor.

It carries out the reaction homogentisate + O2 = 4-maleylacetoacetate + H(+). It functions in the pathway amino-acid degradation; L-phenylalanine degradation; acetoacetate and fumarate from L-phenylalanine: step 4/6. Involved in the catabolism of homogentisate (2,5-dihydroxyphenylacetate or 2,5-OH-PhAc), a central intermediate in the degradation of phenylalanine and tyrosine. Catalyzes the oxidative ring cleavage of the aromatic ring of homogentisate to yield maleylacetoacetate. This chain is Homogentisate 1,2-dioxygenase, found in Rhodopseudomonas palustris (strain BisA53).